Consider the following 209-residue polypeptide: Uracil phosphoribosyltransferase (209 aa).

Residues Arg79, Arg104, and 131–139 (DPMLATGGS) each bind 5-phospho-alpha-D-ribose 1-diphosphate. Uracil-binding positions include Ile194 and 199–201 (GDA). Residue Asp200 participates in 5-phospho-alpha-D-ribose 1-diphosphate binding.

The protein belongs to the UPRTase family. Mg(2+) is required as a cofactor.

It carries out the reaction UMP + diphosphate = 5-phospho-alpha-D-ribose 1-diphosphate + uracil. It participates in pyrimidine metabolism; UMP biosynthesis via salvage pathway; UMP from uracil: step 1/1. With respect to regulation, allosterically activated by GTP. In terms of biological role, catalyzes the conversion of uracil and 5-phospho-alpha-D-ribose 1-diphosphate (PRPP) to UMP and diphosphate. In Clostridium perfringens (strain ATCC 13124 / DSM 756 / JCM 1290 / NCIMB 6125 / NCTC 8237 / Type A), this protein is Uracil phosphoribosyltransferase.